The sequence spans 428 residues: Ribulose bisphosphate carboxylase (428 aa).

The active-site Proton acceptor is the Lys151. A substrate-binding site is contributed by Lys153. Residues Lys177, Asp179, and Glu180 each coordinate Mg(2+). At Lys177 the chain carries N6-carboxylysine. The active-site Proton acceptor is His270. Residues Arg271, His303, 354 to 356 (SGG), and 376 to 379 (QFGG) contribute to the substrate site.

Belongs to the RuBisCO large chain family. Type III subfamily. Homodimer. In contrast to form I RuBisCO, the form III RuBisCO is composed solely of large subunits. The cofactor is Mg(2+).

The catalysed reaction is 2 (2R)-3-phosphoglycerate + 2 H(+) = D-ribulose 1,5-bisphosphate + CO2 + H2O. It carries out the reaction D-ribulose 1,5-bisphosphate + O2 = 2-phosphoglycolate + (2R)-3-phosphoglycerate + 2 H(+). Its activity is regulated as follows. Reversibly inhibited by O(2). Catalyzes the addition of molecular CO(2) and H(2)O to ribulose 1,5-bisphosphate (RuBP), generating two molecules of 3-phosphoglycerate (3-PGA). Functions in an archaeal AMP degradation pathway, together with AMP phosphorylase and R15P isomerase. The chain is Ribulose bisphosphate carboxylase from Methanosarcina acetivorans (strain ATCC 35395 / DSM 2834 / JCM 12185 / C2A).